Here is a 144-residue protein sequence, read N- to C-terminus: HMG1/2-like protein (144 aa).

Disordered regions lie at residues 1-42 (MKGG…PPSA) and 85-144 (PFIS…EDDD). Composition is skewed to basic and acidic residues over residues 8–35 (AKSD…DPNK) and 89–99 (KAEKRKQEYEK). Positions 36–105 (PKRPPSAFFV…EYEKNLQAYN (70 aa)) form a DNA-binding region, HMG box. Residues 126–144 (NDDDEDQDGSGEDDSEDDD) show a composition bias toward acidic residues.

It belongs to the HMGB family. Expressed at higher levels in dark-grown tissues, such as roots; and at lower levels in light-grown tissues, such as cotyledons and stems.

The protein resides in the nucleus. The protein is HMG1/2-like protein of Ipomoea nil (Japanese morning glory).